The sequence spans 290 residues: ATP synthase gamma chain (290 aa).

The protein belongs to the ATPase gamma chain family. F-type ATPases have 2 components, CF(1) - the catalytic core - and CF(0) - the membrane proton channel. CF(1) has five subunits: alpha(3), beta(3), gamma(1), delta(1), epsilon(1). CF(0) has three main subunits: a, b and c.

Its subcellular location is the cell membrane. Produces ATP from ADP in the presence of a proton gradient across the membrane. The gamma chain is believed to be important in regulating ATPase activity and the flow of protons through the CF(0) complex. This chain is ATP synthase gamma chain, found in Wolbachia pipientis subsp. Culex pipiens (strain wPip).